A 260-amino-acid polypeptide reads, in one-letter code: Enoyl-[acyl-carrier-protein] reductase [NADH] FabI (260 aa).

NAD(+) is bound by residues glycine 15, 21–22 (SI), glutamine 42, 66–67 (DV), and methionine 94. Alanine 97 is a binding site for substrate. Active-site proton acceptor residues include tyrosine 147 and tyrosine 157. NAD(+) contacts are provided by residues lysine 164 and 193 to 197 (IKTLA).

This sequence belongs to the short-chain dehydrogenases/reductases (SDR) family. FabI subfamily. As to quaternary structure, homotetramer.

It carries out the reaction a 2,3-saturated acyl-[ACP] + NAD(+) = a (2E)-enoyl-[ACP] + NADH + H(+). The protein operates within lipid metabolism; fatty acid biosynthesis. Catalyzes the reduction of a carbon-carbon double bond in an enoyl moiety that is covalently linked to an acyl carrier protein (ACP). Involved in the elongation cycle of fatty acid which are used in the lipid metabolism. In Rickettsia felis (strain ATCC VR-1525 / URRWXCal2) (Rickettsia azadi), this protein is Enoyl-[acyl-carrier-protein] reductase [NADH] FabI (fabI).